The chain runs to 861 residues: ToMV resistant protein Tm-2 netted virescent (861 aa).

Positions 63–83 form a coiled coil; it reads VKNLLKDIQELAGDVEDLLDD. In terms of domain architecture, NB-ARC spans 162–388; sequence DDFNMLQAKL…LESMGHKVQD (227 aa). 185-192 contributes to the ATP binding site; sequence GMPGLGKT. 13 LRR repeats span residues 225-248, 305-327, 388-411, 449-472, 510-536, 585-608, 609-631, 652-680, 689-710, 712-735, 736-758, 784-807, and 810-835; these read LDIAKQIGLTEQKMKENLEDNLRS, LHALQPLESEKSFELFTKKIFNF, DGCAKVLALSYNDLPIASRPCFLY, LAEDVLNDLVSRNLIQLAKRTYNG, VARLRRITFYSDNVMIEFFRSNPKLEK, MTCLRYLRLEGNICGKLPNSIVKL, TRLETIDIDRRSLIQPPSGVWES, ISSFYPNIYSLHPNNLQTLMWIPDKFFEP, LRKLGILGVSNSTVKMLSIFSP, LKALEVLKLSFSSDPSEQIKLSSY, PHIAKLHLNVNRTMALNSQSFPP, LRKLKMFICKYNEEKMALSGEANG, and FPQLEVLHIHSPNGLSEVTCTDDVSM.

Belongs to the disease resistance NB-LRR family. In terms of assembly, (Microbial infection) Interacts with tobamoviruses mouvement protein at the plasma membrane; this interaction triggers defense responses leading to programmed cell death. As to quaternary structure, binds to HSP90 proteins; this interaction seems required for defense responses toward tobamoviruses.

The protein resides in the cell membrane. Functionally, inhibitor of viral mouvements which confers resistance to some tobamoviruses including tomato mosaic virus (ToMV) (e.g. isolate L and W3) and tobacco mosaic virus (TMV), but not to resistance-breaking isolates (e.g. Ltbl) ToMV and tomato brown rugose fruit virus (ToBRFV). Elicits a hypersensitive reaction in response to avirulent (Avr) movement proteins from resistance inducing tobamoviruses (e.g. ToMV and TMV) strains, thus leading to programmed cell death. This chain is ToMV resistant protein Tm-2 netted virescent, found in Solanum lycopersicum (Tomato).